A 704-amino-acid polypeptide reads, in one-letter code: MARTTPLERYRNIGICAHVDAGKTTTTERILFYTGLSHKIGETHDGAATMDWMEQEQERGITITSAATTCFWKGMDAQFDAHRINIIDTPGHVDFTIEVERSLRVLDGAVVVLCASSGVQPQTETVWRQANKYEVPRMIFVNKMDRTGADFFAVVDQVKSRLGATPVPIQLPIGAEDGFKGVIDLIKMKAINWNEADQGMTFTYEAIPAELQELADEWRSHLVESAAEATEELMDKYLEGEELSEAEIKEALRQRTLANDIVPMTCGSAFKNKGVQAVLDCVVEYMPAPTQVKQIQGILEDGTEEERPADDKAPFAALAFKIATDPFVGTLTFFRVYSGTVKQGDAVYNPVKSKRERLGRIVQMHSNSREEIKEVFAGDIAAAIGLKDVTTGETLCDPKSIITLERMEFPEPVISVAVEPRTIADQDKMGIALGKLAAEDPSFRVQTDEESGQIIISGMGELHLDILVERMKREFSVECNVGKPQVAYREAIRSTVKVEGKFIRQSGGRGQYGHVWLKLEPMDITDDEAPIYEFVNETVGGSIPKEYVPAVDKGIQEQMSQGVLAGYPLLGVKATLYDGSFHDVDSNEMAFKIAGSLAMKQGALQASPVLLEPVMKVEVLTPEANMGDVVGDLNRRRGMIEGMEDALGGLKQINAQVPLSEMFGYATDLRSATQGRASYSMEFLKYAEASKHVAETIISARAVI.

One can recognise a tr-type G domain in the interval 8–290 (ERYRNIGICA…CVVEYMPAPT (283 aa)). Residues 17-24 (AHVDAGKT), 88-92 (DTPGH), and 142-145 (NKMD) contribute to the GTP site.

The protein belongs to the TRAFAC class translation factor GTPase superfamily. Classic translation factor GTPase family. EF-G/EF-2 subfamily.

Its subcellular location is the cytoplasm. Its function is as follows. Catalyzes the GTP-dependent ribosomal translocation step during translation elongation. During this step, the ribosome changes from the pre-translocational (PRE) to the post-translocational (POST) state as the newly formed A-site-bound peptidyl-tRNA and P-site-bound deacylated tRNA move to the P and E sites, respectively. Catalyzes the coordinated movement of the two tRNA molecules, the mRNA and conformational changes in the ribosome. This chain is Elongation factor G 1, found in Pseudoalteromonas translucida (strain TAC 125).